We begin with the raw amino-acid sequence, 185 residues long: TATA-box-binding protein (185 aa).

A run of 2 repeats spans residues 3–78 (IQNI…REDL) and 94–176 (IQNI…AEKI).

It belongs to the TBP family.

General factor that plays a role in the activation of archaeal genes transcribed by RNA polymerase. Binds specifically to the TATA box promoter element which lies close to the position of transcription initiation. The chain is TATA-box-binding protein from Methanopyrus kandleri (strain AV19 / DSM 6324 / JCM 9639 / NBRC 100938).